The chain runs to 570 residues: Urease subunit alpha (570 aa).

The region spanning 131–570 is the Urease domain; sequence GGFDSHIHFI…LPLAQRYFMF (440 aa). His136, His138, and Lys219 together coordinate Ni(2+). Lys219 carries the post-translational modification N6-carboxylysine. Residue His221 participates in substrate binding. Positions 248 and 274 each coordinate Ni(2+). The active-site Proton donor is His322. Asp362 lines the Ni(2+) pocket.

Belongs to the metallo-dependent hydrolases superfamily. Urease alpha subunit family. As to quaternary structure, heterotrimer of UreA (gamma), UreB (beta) and UreC (alpha) subunits. Three heterotrimers associate to form the active enzyme. Ni cation serves as cofactor. Carboxylation allows a single lysine to coordinate two nickel ions.

The protein resides in the cytoplasm. The catalysed reaction is urea + 2 H2O + H(+) = hydrogencarbonate + 2 NH4(+). Its pathway is nitrogen metabolism; urea degradation; CO(2) and NH(3) from urea (urease route): step 1/1. This is Urease subunit alpha from Rhodopseudomonas palustris (strain ATCC BAA-98 / CGA009).